The following is a 326-amino-acid chain: MEMO1 family protein TTHA0924 (326 aa).

The protein belongs to the MEMO1 family.

The protein is MEMO1 family protein TTHA0924 of Thermus thermophilus (strain ATCC 27634 / DSM 579 / HB8).